The sequence spans 149 residues: Cytochrome c-type biogenesis protein CcmE (149 aa).

The Cytoplasmic portion of the chain corresponds to 1–7; the sequence is MKKRHQR. A helical; Signal-anchor for type II membrane protein membrane pass occupies residues 8 to 28; it reads LFLVLGVVAGVSVATALVLNA. At 29-149 the chain is on the periplasmic side; the sequence is FRDNMTFFIT…EHSVDEVGDY (121 aa). Heme is bound by residues His-123 and Tyr-127.

The protein belongs to the CcmE/CycJ family.

Its subcellular location is the cell inner membrane. Heme chaperone required for the biogenesis of c-type cytochromes. Transiently binds heme delivered by CcmC and transfers the heme to apo-cytochromes in a process facilitated by CcmF and CcmH. In Halorhodospira halophila (strain DSM 244 / SL1) (Ectothiorhodospira halophila (strain DSM 244 / SL1)), this protein is Cytochrome c-type biogenesis protein CcmE.